A 311-amino-acid chain; its full sequence is Methionyl-tRNA formyltransferase (311 aa).

110–113 serves as a coordination point for (6S)-5,6,7,8-tetrahydrofolate; it reads SLLP.

It belongs to the Fmt family.

The catalysed reaction is L-methionyl-tRNA(fMet) + (6R)-10-formyltetrahydrofolate = N-formyl-L-methionyl-tRNA(fMet) + (6S)-5,6,7,8-tetrahydrofolate + H(+). Functionally, attaches a formyl group to the free amino group of methionyl-tRNA(fMet). The formyl group appears to play a dual role in the initiator identity of N-formylmethionyl-tRNA by promoting its recognition by IF2 and preventing the misappropriation of this tRNA by the elongation apparatus. The sequence is that of Methionyl-tRNA formyltransferase from Streptococcus pneumoniae (strain P1031).